The sequence spans 195 residues: Probable nicotinate-nucleotide adenylyltransferase (195 aa).

It belongs to the NadD family.

It catalyses the reaction nicotinate beta-D-ribonucleotide + ATP + H(+) = deamido-NAD(+) + diphosphate. It functions in the pathway cofactor biosynthesis; NAD(+) biosynthesis; deamido-NAD(+) from nicotinate D-ribonucleotide: step 1/1. Catalyzes the reversible adenylation of nicotinate mononucleotide (NaMN) to nicotinic acid adenine dinucleotide (NaAD). In Salinibacter ruber (strain DSM 13855 / M31), this protein is Probable nicotinate-nucleotide adenylyltransferase.